The primary structure comprises 219 residues: Germin-like protein subfamily 2 member 2 (219 aa).

The signal sequence occupies residues methionine 1 to alanine 22. A disulfide bond links cysteine 32 and cysteine 47. N-linked (GlcNAc...) asparagine glycans are attached at residues asparagine 52 and asparagine 70. The region spanning phenylalanine 59–aspartate 209 is the Cupin type-1 domain. Mn(2+) contacts are provided by histidine 109, histidine 111, glutamate 116, and histidine 155.

This sequence belongs to the germin family. As to quaternary structure, oligomer (believed to be a pentamer but probably hexamer).

The protein localises to the secreted. It is found in the extracellular space. It localises to the apoplast. Its function is as follows. May play a role in plant defense. Probably has no oxalate oxidase activity even if the active site is conserved. This chain is Germin-like protein subfamily 2 member 2, found in Arabidopsis thaliana (Mouse-ear cress).